A 241-amino-acid polypeptide reads, in one-letter code: Alkylated DNA repair protein ALKBH6 homolog (241 aa).

One can recognise a Fe2OG dioxygenase domain in the interval 87-232 (AINHVLINEY…RVSLTCRLVP (146 aa)). Fe cation-binding residues include H105, D107, and H181. 2-oxoglutarate is bound by residues R223 and R229.

The protein belongs to the alkB family. Fe(2+) serves as cofactor.

Its subcellular location is the nucleus. Functionally, probable RNA demethylase that binds to both N6-methyladenosine-containing- (m(6)A) and C5-methylcytidine-containing- (m(5)C) RNAs, thus being a probable m(6)A and m(5)C eraser. Involved in responses to abscisic acid (ABA) via the modulation of the expression of ABA signaling-related genes (e.g. ABI3 and ABI4). Acts as a negative regulator during seed germination under abiotic stresses (e.g. salt, cold and ABA). Positive modulator of seedling growth and survival in response to drought and heat, but counteracts tolerance to salt. This Arabidopsis thaliana (Mouse-ear cress) protein is Alkylated DNA repair protein ALKBH6 homolog.